Reading from the N-terminus, the 451-residue chain is uncharacterized protein (451 aa).

One can recognise a TRAM domain in the interval 2–60 (VVKVKQKIPLKIKRMGINGEGIGFYQKTLVFVPGALKGEDIFCQITAVKRNFAEAKLLT). 4 residues coordinate [4Fe-4S] cluster: Cys-73, Cys-79, Cys-82, and Cys-162. The S-adenosyl-L-methionine site is built by Gln-283, Tyr-312, Asp-333, and Asp-381. Cys-408 acts as the Nucleophile in catalysis.

The protein belongs to the class I-like SAM-binding methyltransferase superfamily. RNA M5U methyltransferase family.

This is an uncharacterized protein from Streptococcus pyogenes serotype M1.